We begin with the raw amino-acid sequence, 174 residues long: MALLEIIHYPSKILRTISKEVVSFDAKLHQQLDDMHETMIASEGIGLAAIQVGLPLRMLIINLPREDGVQHKEDCLEIINPKFIETGGSMMYREGCLSVPGFYEEVERFEKVKIEYQNRFAEVKVLEASELLAVAIQHEIDHLNGVLFVDKLSILKRKKFEKELKELQKQQKHK.

C96 and H138 together coordinate Fe cation. E139 is a catalytic residue. H142 is a Fe cation binding site.

It belongs to the polypeptide deformylase family. Fe(2+) serves as cofactor.

The enzyme catalyses N-terminal N-formyl-L-methionyl-[peptide] + H2O = N-terminal L-methionyl-[peptide] + formate. Functionally, removes the formyl group from the N-terminal Met of newly synthesized proteins. Requires at least a dipeptide for an efficient rate of reaction. N-terminal L-methionine is a prerequisite for activity but the enzyme has broad specificity at other positions. The chain is Peptide deformylase from Helicobacter pylori (strain HPAG1).